The sequence spans 625 residues: Chaperone protein HtpG (625 aa).

An a; substrate-binding region spans residues 1 to 337 (MSTNQETRGF…TNDLPLNVSR (337 aa)). Residues 338–554 (EILQENKITA…NDEMTTQMAK (217 aa)) form a b region. A c region spans residues 555-625 (LFAAMGQKAP…FIKRMNKLLG (71 aa)).

The protein belongs to the heat shock protein 90 family. As to quaternary structure, homodimer.

The protein localises to the cytoplasm. In terms of biological role, molecular chaperone. Has ATPase activity. This is Chaperone protein HtpG from Actinobacillus pleuropneumoniae serotype 3 (strain JL03).